Consider the following 294-residue polypeptide: Porphobilinogen deaminase (294 aa).

Cys232 carries the S-(dipyrrolylmethanemethyl)cysteine modification.

The protein belongs to the HMBS family. In terms of assembly, monomer. The cofactor is dipyrromethane.

The enzyme catalyses 4 porphobilinogen + H2O = hydroxymethylbilane + 4 NH4(+). It functions in the pathway porphyrin-containing compound metabolism; protoporphyrin-IX biosynthesis; coproporphyrinogen-III from 5-aminolevulinate: step 2/4. Tetrapolymerization of the monopyrrole PBG into the hydroxymethylbilane pre-uroporphyrinogen in several discrete steps. The chain is Porphobilinogen deaminase from Corynebacterium diphtheriae (strain ATCC 700971 / NCTC 13129 / Biotype gravis).